The primary structure comprises 357 residues: DENN domain-containing protein 10 (357 aa).

The region spanning 1 to 140 (MAAAEVADTQ…TKGICQSEEN (140 aa)) is the uDENN domain. In terms of domain architecture, cDENN spans 165-299 (QFGMETVILH…PEKSESHVIQ (135 aa)). Positions 301–357 (IALKTREIFTNLAPFSEVSADGEKRVLNLEALKQKRFPPATENFLYHLAAAEQMLKI) constitute a dDENN domain.

This sequence belongs to the DENND10 family. As to quaternary structure, interacts with the coiled-coil heterodimer of CCDC22 and CCDC93; the interaction is direct. Interacts with RAB27A and RAB27B (GDP-bound forms preferentially).

The protein localises to the late endosome. Functionally, guanine nucleotide exchange factor (GEF) regulating homeostasis of late endocytic pathway, including endosomal positioning, maturation and secretion, possibly through activating Rab proteins such as RAB27A and RAB27B. Promotes the exchange of GDP to GTP, converting inactive GDP-bound RAB27A and RAB27B into their active GTP-bound form. This chain is DENN domain-containing protein 10, found in Homo sapiens (Human).